A 546-amino-acid chain; its full sequence is Germacrene-D synthase (546 aa).

The Mg(2+) site is built by aspartate 303, aspartate 307, aspartate 448, and glutamate 456. The DDXXD motif motif lies at aspartate 303–aspartate 307.

This sequence belongs to the terpene synthase family. The cofactor is Mg(2+). Mn(2+) is required as a cofactor.

The catalysed reaction is (2E,6E)-farnesyl diphosphate = (-)-germacrene D + diphosphate. It participates in secondary metabolite biosynthesis; terpenoid biosynthesis. Its function is as follows. Sesquiterpene synthase that catalyzes the formation of germacrene D from trans,trans-farnesyl diphosphate (FPP). The sequence is that of Germacrene-D synthase (GDS) from Ocimum basilicum (Sweet basil).